Reading from the N-terminus, the 415-residue chain is Lipid II:glycine glycyltransferase (415 aa).

Belongs to the FemABX family.

It is found in the cytoplasm. It catalyses the reaction beta-D-GlcNAc-(1-&gt;4)-Mur2Ac(oyl-L-Ala-D-isoglutaminyl-L-Lys-D-Ala-D-Ala)-di-trans,octa-cis-undecaprenyl diphosphate + glycyl-tRNA(Gly) = beta-D-GlcNAc-(1-&gt;4)-Mur2Ac(oyl-L-Ala-D-isoglutaminyl-L-Lys-(N(6)-Gly)-D-Ala-D-Ala)-di-trans,octa-cis-undecaprenyl diphosphate + tRNA(Gly) + H(+). Its function is as follows. Catalyzes the incorporation of amino acid(s) into the interchain peptide bridge of peptidoglycan, using aminoacyl-tRNA as amino acid donor. The chain is Lipid II:glycine glycyltransferase (femX) from Staphylococcus saprophyticus subsp. saprophyticus (strain ATCC 15305 / DSM 20229 / NCIMB 8711 / NCTC 7292 / S-41).